Reading from the N-terminus, the 2890-residue chain is Bifunctional DNA-directed RNA polymerase subunit beta-beta' (2890 aa).

The DNA-directed RNA polymerase subunit beta stretch occupies residues 1–1377; the sequence is MSKKIPLKNR…DINIFGDEMD (1377 aa). The segment at 1384–2890 is DNA-directed RNA polymerase subunit beta'; it reads PIVIKEDDRP…LRTIEDSPKI (1507 aa). Residues cysteine 1449, cysteine 1451, cysteine 1465, and cysteine 1468 each contribute to the Zn(2+) site. The Mg(2+) site is built by aspartate 1849, aspartate 1851, and aspartate 1853. Residues cysteine 2179, cysteine 2253, cysteine 2260, and cysteine 2263 each contribute to the Zn(2+) site.

It in the N-terminal section; belongs to the RNA polymerase beta chain family. This sequence in the C-terminal section; belongs to the RNA polymerase beta' chain family. As to quaternary structure, the RNAP catalytic core consists of 2 alpha, 1 beta/beta' and 1 omega subunit. When a sigma factor is associated with the core the holoenzyme is formed, which can initiate transcription. Mg(2+) is required as a cofactor. The cofactor is Zn(2+).

The enzyme catalyses RNA(n) + a ribonucleoside 5'-triphosphate = RNA(n+1) + diphosphate. In terms of biological role, DNA-dependent RNA polymerase catalyzes the transcription of DNA into RNA using the four ribonucleoside triphosphates as substrates. The chain is Bifunctional DNA-directed RNA polymerase subunit beta-beta' (rpoBC) from Helicobacter acinonychis (strain Sheeba).